Reading from the N-terminus, the 290-residue chain is Probable proteasome subunit beta type-6 (290 aa).

This sequence belongs to the peptidase T1B family. As to quaternary structure, the 26S proteasome consists of a 20S proteasome core and two 19S regulatory subunits. The 20S proteasome core is composed of 28 subunits that are arranged in four stacked rings, resulting in a barrel-shaped structure. The two end rings are each formed by seven alpha subunits, and the two central rings are each formed by seven beta subunits. The catalytic chamber with the active sites is on the inside of the barrel.

The protein localises to the cytoplasm. It localises to the nucleus. Functionally, non-catalytic component of the proteasome which degrades poly-ubiquitinated proteins in the cytoplasm and in the nucleus. It is essential for the regulated turnover of proteins and for the removal of misfolded proteins. The proteasome is a multicatalytic proteinase complex that is characterized by its ability to cleave peptides with Arg, Phe, Tyr, Leu, and Glu adjacent to the leaving group at neutral or slightly basic pH. It has an ATP-dependent proteolytic activity. The protein is Probable proteasome subunit beta type-6 (PRE7) of Encephalitozoon cuniculi (strain GB-M1) (Microsporidian parasite).